The sequence spans 227 residues: Fibrillarin-like rRNA/tRNA 2'-O-methyltransferase (227 aa).

S-adenosyl-L-methionine contacts are provided by residues 86-87 (TT), 105-106 (EF), 130-131 (DA), and 150-153 (DVAQ).

It belongs to the methyltransferase superfamily. Fibrillarin family. Interacts with nop5. Component of box C/D small ribonucleoprotein (sRNP) particles that contain rpl7ae, FlpA and nop5, plus a guide RNA.

Functionally, involved in pre-rRNA and tRNA processing. Utilizes the methyl donor S-adenosyl-L-methionine to catalyze the site-specific 2'-hydroxyl methylation of ribose moieties in rRNA and tRNA. Site specificity is provided by a guide RNA that base pairs with the substrate. Methylation occurs at a characteristic distance from the sequence involved in base pairing with the guide RNA. This chain is Fibrillarin-like rRNA/tRNA 2'-O-methyltransferase, found in Pyrococcus abyssi (strain GE5 / Orsay).